Here is a 461-residue protein sequence, read N- to C-terminus: Putative cytochrome P450 132 (461 aa).

A heme-binding site is contributed by C409.

It belongs to the cytochrome P450 family. Requires heme as cofactor.

This Mycobacterium tuberculosis (strain ATCC 25618 / H37Rv) protein is Putative cytochrome P450 132 (cyp132).